The chain runs to 448 residues: MNTHRYLPMTEEDKKEMLATIGVDSIEALFADIPESTRFKSQLAIEAALKEPELIAHFQKLADENQSIKTYTSFLGAGVYEHYIPSIVDHVISRSEFYTAYTPYQPEISQGELQAIFEFQTMICELTGMDIANSSMYDGPTALAEAAMLSCGHTKKKTILVSKAVHPEARAVLKTNAYGQRLNVIEIDANANVTDIESLKAAYNDEVACVIVQHPNFYGSLEPLAEIEEIVHQGKAQFVVSSNPLALGVLKPPGDFGADIVVGDAQPFGIPVQFGGPHCGYFATTKKLMRKIPGRLVGQTVDEEGRRGFVLTLQAREQHIRREKATSNICSNQALNALAASVAMTALGKQGVKEMAKQNVQKSAYLKKQLSLAGIDVVGDGPTFNEFVINCGQPVKDVNRQLLEKGMIGGFDLGSVEPERNGQMLVCVTELRTKEELDLFANEMGALV.

This sequence belongs to the GcvP family. N-terminal subunit subfamily. In terms of assembly, the glycine cleavage system is composed of four proteins: P, T, L and H. In this organism, the P 'protein' is a heterodimer of two subunits.

It carries out the reaction N(6)-[(R)-lipoyl]-L-lysyl-[glycine-cleavage complex H protein] + glycine + H(+) = N(6)-[(R)-S(8)-aminomethyldihydrolipoyl]-L-lysyl-[glycine-cleavage complex H protein] + CO2. Functionally, the glycine cleavage system catalyzes the degradation of glycine. The P protein binds the alpha-amino group of glycine through its pyridoxal phosphate cofactor; CO(2) is released and the remaining methylamine moiety is then transferred to the lipoamide cofactor of the H protein. The polypeptide is Probable glycine dehydrogenase (decarboxylating) subunit 1 (Shouchella clausii (strain KSM-K16) (Alkalihalobacillus clausii)).